Here is a 109-residue protein sequence, read N- to C-terminus: Nucleoid-associated protein HAPS_1040 (109 aa).

The interval Met1–Met21 is disordered. Residues Leu10–Glu19 are compositionally biased toward low complexity.

The protein belongs to the YbaB/EbfC family. Homodimer.

The protein localises to the cytoplasm. It is found in the nucleoid. Binds to DNA and alters its conformation. May be involved in regulation of gene expression, nucleoid organization and DNA protection. This Glaesserella parasuis serovar 5 (strain SH0165) (Haemophilus parasuis) protein is Nucleoid-associated protein HAPS_1040.